Reading from the N-terminus, the 684-residue chain is Methionine--tRNA ligase (684 aa).

The 'HIGH' region motif lies at 15–25 (PYANGAIHLGH). The Zn(2+) site is built by Cys146, Cys149, Cys159, and Cys162. The 'KMSKS' region signature appears at 331–335 (KMSKS). ATP is bound at residue Lys334. Residues 582 to 684 (DFAKLDLRVA…SGVTAGMQVR (103 aa)) form the tRNA-binding domain.

This sequence belongs to the class-I aminoacyl-tRNA synthetase family. MetG type 1 subfamily. As to quaternary structure, homodimer. It depends on Zn(2+) as a cofactor.

Its subcellular location is the cytoplasm. The catalysed reaction is tRNA(Met) + L-methionine + ATP = L-methionyl-tRNA(Met) + AMP + diphosphate. Is required not only for elongation of protein synthesis but also for the initiation of all mRNA translation through initiator tRNA(fMet) aminoacylation. The chain is Methionine--tRNA ligase from Glaesserella parasuis serovar 5 (strain SH0165) (Haemophilus parasuis).